A 273-amino-acid polypeptide reads, in one-letter code: Large ribosomal subunit protein uL2cz/uL2cy (273 aa).

Disordered stretches follow at residues 1–25 (MAKHLYKTPIPSTRKGTLDRQVKSN) and 225–253 (PVDHPHGGGEGKAPIGRKKPTTPWGYPAL).

This sequence belongs to the universal ribosomal protein uL2 family. In terms of assembly, part of the 50S ribosomal subunit.

The protein localises to the plastid. The protein resides in the chloroplast. The protein is Large ribosomal subunit protein uL2cz/uL2cy (rpl2-A) of Triticum aestivum (Wheat).